A 314-amino-acid polypeptide reads, in one-letter code: PDZ domain-containing protein GIPC2 (314 aa).

Residues 1–12 show a composition bias toward basic residues; that stretch reads MPLGLRGKKKAA. The tract at residues 1-36 is disordered; that stretch reads MPLGLRGKKKAAKSKEAARLVEGERSSGSQGVPGPP. A compositionally biased stretch (basic and acidic residues) spans 13 to 25; it reads KSKEAARLVEGER. Residues 117–197 enclose the PDZ domain; sequence EVNVYKSEDS…EELFTLQLIE (81 aa).

It belongs to the GIPC family. Probably interacts with SEMA5A. In terms of tissue distribution, expressed in kidney and lung (at protein level).

It is found in the cytoplasm. The chain is PDZ domain-containing protein GIPC2 (Gipc2) from Mus musculus (Mouse).